The chain runs to 1984 residues: Sodium channel protein type 9 subunit alpha (1984 aa).

Over 1 to 125 (MAMLPPPGPQ…RRISIKILVH (125 aa)) the chain is Cytoplasmic. A compositionally biased stretch (basic and acidic residues) spans 26–39 (RISEEKAKEHKDEK). The segment at 26 to 55 (RISEEKAKEHKDEKKDDEEEGPKPSSDLEA) is disordered. Residues 112 to 410 (FSPLRRISIK…VAMAYEEQNQ (299 aa)) form an I repeat. A helical membrane pass occupies residues 126-145 (SLFSMLIMCTILTNCIFMTL). The Extracellular segment spans residues 146-150 (SNPPE). Residues 151 to 172 (WTKNVEYTFTGIYTFESLIKIL) form a helical membrane-spanning segment. Over 173-185 (ARGFCVGEFTFLR) the chain is Cytoplasmic. A helical transmembrane segment spans residues 186–204 (DPWNWLDFVVIVFAYLTEF). The Extracellular portion of the chain corresponds to 205 to 210 (VNLGNV). N209 carries an N-linked (GlcNAc...) asparagine glycan. Residues 211–227 (SALRTFRVLRALKTISV) traverse the membrane as a helical segment. Topologically, residues 228–241 (IPGLKTIVGALIQS) are cytoplasmic. Residues 242 to 267 (VKKLSDVMILTVFCLSVFALIGLQLF) traverse the membrane as a helical segment. Over 268-346 (MGNLKHKCFR…PDYGYTSFDT (79 aa)) the chain is Extracellular. A disulfide bridge links C275 with C324. Residue N283 is glycosylated (N-linked (GlcNAc...) asparagine). The pore-forming intramembrane region spans 347–363 (FSWAFLALFRLMTQDYW). The Extracellular portion of the chain corresponds to 364–376 (ENLYQQTLRAAGK). A helical membrane pass occupies residues 377–402 (TYMIFFVVVIFLGSFYLINLILAVVA). Over 403 to 744 (MAYEEQNQAN…LIYFIVMDPF (342 aa)) the chain is Cytoplasmic. Positions 461-471 (SSSETSRLSSK) are enriched in low complexity. 2 disordered regions span residues 461–542 (SSSE…RGSL) and 576–609 (IFGD…RSPP). A compositionally biased stretch (basic residues) spans 474 to 486 (KERRNRRKKKKQK). Residues 489–509 (SGEEKGDDEKLSKSGSEESIR) show a composition bias toward basic and acidic residues. The II repeat unit spans residues 725-988 (CSPYWIKFKK…EEDTDANNLQ (264 aa)). A helical transmembrane segment spans residues 745-761 (VDLAITICIVLNTLFMA). Residues 762–770 (MEHHPMTEE) lie on the Extracellular side of the membrane. A helical membrane pass occupies residues 771-795 (FKNVLAVGNLIFTGIFAAEMVLKLI). Over 796 to 804 (AMDPYEYFQ) the chain is Cytoplasmic. Residues 805-821 (VGWNIFDSLIVTLSLIE) traverse the membrane as a helical segment. The Extracellular segment spans residues 822-830 (LFLADVEGL). Residues 831–847 (SVLRSFRLLRVFKLAKS) traverse the membrane as a helical segment. The Cytoplasmic portion of the chain corresponds to 848 to 864 (WPTLNMLIKIIGNSVGA). Residues 865–887 (LGNLTLVLAIIVFIFAVVGMQLF) traverse the membrane as a helical segment. At 888–914 (GKSYKECVCKINVDCKLPRWHMNDFFH) the chain is on the extracellular side. The cysteines at positions 896 and 902 are disulfide-linked. An intramembrane region (pore-forming) is located at residues 915 to 927 (SFLIVFRVLCGEW). The Extracellular segment spans residues 928 to 939 (IETMWDCMEVAG). A disulfide bridge connects residues C934 and C943. The helical transmembrane segment at 940–966 (QTMCLIVYMMVMVIGNLVVLNLFLALL) threads the bilayer. At 967–1185 (LSSFSSDNLT…WWTIRKTCYR (219 aa)) the chain is on the cytoplasmic side. Disordered stretches follow at residues 1015-1040 (KKPK…ISNR) and 1103-1145 (EELS…EPVN). Residues 1019-1035 (GSKDTKRTADPNNKKEN) are compositionally biased toward basic and acidic residues. Residues 1135–1145 (GEEEAEAEPVN) are compositionally biased toward acidic residues. The III repeat unit spans residues 1178 to 1486 (TIRKTCYRIV…KKYYNAMKKL (309 aa)). A helical membrane pass occupies residues 1186–1210 (IVEHSWFESFIVLMILLSSGALAFE). Residues 1211–1222 (DIYIEKKKTIKI) are Extracellular-facing. Residues 1223-1248 (ILEYADKIFTYIFILEMLLKWVAYGY) traverse the membrane as a helical segment. The Cytoplasmic portion of the chain corresponds to 1249–1250 (KT). A helical membrane pass occupies residues 1251–1276 (YFTNAWCWLDFLIVDVSLVTLVANTL). Residues 1277 to 1285 (GYSDLGPIK) lie on the Extracellular side of the membrane. A helical transmembrane segment spans residues 1286–1302 (SLRTLRALRPLRALSRF). The Cytoplasmic portion of the chain corresponds to 1303 to 1315 (EGMRVVVNALIGA). A helical transmembrane segment spans residues 1316 to 1340 (IPSIMNVLLVCLIFWLIFSIMGVNL). The Extracellular segment spans residues 1341-1392 (FAGKFYECVNTTDGSRFPTSQVANRSECFALMNVSGNVRWKNLKVNFDNVGL). A disulfide bridge connects residues C1348 and C1368. Residues N1350, N1364, and N1373 are each glycosylated (N-linked (GlcNAc...) asparagine). An intramembrane region (pore-forming) is located at residues 1393–1403 (GYLSLLQVATF). The Extracellular portion of the chain corresponds to 1404–1429 (KGWMDIMYAAVDSVNVNEQPKYEYSL). Residues 1430 to 1455 (YMYIYFVIFIIFGSFFTLNLFIGVII) form a helical membrane-spanning segment. Topologically, residues 1456–1512 (DNFNQQKKKLGGQDIFMTEEQKKYYNAMKKLGSKKPQKPIPRPGNKFQGCIFDLVTN) are cytoplasmic. Residue S1488 is modified to Phosphoserine; by PKC. One copy of the IV repeat lies at 1495–1793 (IPRPGNKFQG…WEKFDPDATQ (299 aa)). Residues 1513-1532 (QAFDITIMVLICLNMVTMMV) form a helical membrane-spanning segment. Residues 1533 to 1543 (EKEGQTEYMDY) are Extracellular-facing. Residues 1544 to 1565 (VLHWINMVFIILFTGECVLKLI) form a helical membrane-spanning segment. At 1566 to 1574 (SLRHYYFTV) the chain is on the cytoplasmic side. A helical transmembrane segment spans residues 1575-1596 (GWNIFDFVVVILSIVGMFLAEM). Residues 1597 to 1605 (IEKYFVSPT) are Extracellular-facing. Residues 1606–1625 (LFRVIRLARIGRILRLIKGA) form a helical membrane-spanning segment. The Cytoplasmic portion of the chain corresponds to 1626-1638 (KGIRTLLFALMMS). A helical membrane pass occupies residues 1639–1661 (LPALFNIGLLLFLVMFIYAIFGM). Residues 1662 to 1684 (SNFAYVKKEAGINDMFNFETFGN) are Extracellular-facing. The segment at residues 1685–1697 (SMICLFQITTSAG) is an intramembrane region (pore-forming). Over 1698-1731 (WDGLLAPILNSAPPDCDPKKVHPGSSVEGDCGNP) the chain is Extracellular. C1713 and C1728 are joined by a disulfide. Residues 1732 to 1757 (SVGIFYFVSYIIISFLVVVNMYIAVI) form a helical membrane-spanning segment. Over 1758–1984 (LENFSVATEE…EDKEKDESRK (227 aa)) the chain is Cytoplasmic. The IQ domain occupies 1887 to 1916 (EEVSATIIQRAYRRYRLRQHVKNISSIYIK). A compositionally biased stretch (basic and acidic residues) spans 1916-1930 (KDGDRDDDLPNKEDT). The disordered stretch occupies residues 1916 to 1984 (KDGDRDDDLP…EDKEKDESRK (69 aa)). The segment covering 1946 to 1958 (VTASTISPPSYDS) has biased composition (polar residues). Positions 1960 to 1984 (TKPDQEKYETDKTEKEDKEKDESRK) are enriched in basic and acidic residues.

Belongs to the sodium channel (TC 1.A.1.10) family. Nav1.7/SCN9A subfamily. As to quaternary structure, the Nav1.7 voltage-gated sodium channel consists of an ion-conducting alpha subunit SCN9A which is functional on its own regulated by one or more beta-1 (SCN1B), beta-2 (SCN2B), beta-3 (SCN3B) and beta-4 (SCN4B) subunits. SCN1B and SCN3B are non-covalently associated with SCN9A. SCN2B and SCN4B are disulfide-linked to SCN9A. SCN1B regulates channel inactivation. Interacts with NEDD4 and NEDD4L; regulates Nav1.7 activity most probably through ubiquitination and subsequent endocytosis. Interacts with TMEM233; modulates the gating properties of NaV1.7. Phosphorylation at Ser-1488 by PKC in a highly conserved cytoplasmic loop increases peak sodium currents. In terms of processing, ubiquitinated by NEDD4L; which may promote its endocytosis. Does not seem to be ubiquitinated by NEDD4. Post-translationally, ubiquitinated by NEDD4L; which may promote its endocytosis. Expressed at high level in the dorsal root ganglion and at much lower levels in the brain, sciatic nerve, nodose ganglia, heart, thyroid and adrenal glands and Schwann cells, but not in the cardiac and skeletal muscles, brain and liver.

Its subcellular location is the cell membrane. It is found in the cell projection. The protein resides in the neuron projection. It localises to the axon. The enzyme catalyses Na(+)(in) = Na(+)(out). Inhibited by the conotoxin GVIIJ. Functionally, pore-forming subunit of Nav1.7, a voltage-gated sodium (Nav) channel that directly mediates the depolarizing phase of action potentials in excitable membranes. Navs, also called VGSCs (voltage-gated sodium channels) or VDSCs (voltage-dependent sodium channels), operate by switching between closed and open conformations depending on the voltage difference across the membrane. In the open conformation they allow Na(+) ions to selectively pass through the pore, along their electrochemical gradient. The influx of Na(+) ions provokes membrane depolarization, initiating the propagation of electrical signals throughout cells and tissues. Nav1.7 plays a crucial role in controlling the excitability and action potential propagation from nociceptor neurons, thereby contributing to the sensory perception of pain. This is Sodium channel protein type 9 subunit alpha from Rattus norvegicus (Rat).